The following is a 119-amino-acid chain: UPF0292 protein TV1259 (119 aa).

In terms of domain architecture, Toprim spans Ser11–Ile93. Residues Glu17, Asp62, and Asp64 each contribute to the Mg(2+) site.

The protein belongs to the UPF0292 family. The cofactor is Mg(2+).

The polypeptide is UPF0292 protein TV1259 (Thermoplasma volcanium (strain ATCC 51530 / DSM 4299 / JCM 9571 / NBRC 15438 / GSS1)).